Here is a 406-residue protein sequence, read N- to C-terminus: Cysteine desulfurase (406 aa).

Lys-226 bears the N6-(pyridoxal phosphate)lysine mark. Cys-364 functions as the Cysteine persulfide intermediate in the catalytic mechanism.

It belongs to the class-V pyridoxal-phosphate-dependent aminotransferase family. Csd subfamily. As to quaternary structure, homodimer. Interacts with SufE and the SufBCD complex composed of SufB, SufC and SufD. The interaction with SufE is required to mediate the direct transfer of the sulfur atom from the S-sulfanylcysteine. The cofactor is pyridoxal 5'-phosphate.

The protein resides in the cytoplasm. The enzyme catalyses (sulfur carrier)-H + L-cysteine = (sulfur carrier)-SH + L-alanine. The catalysed reaction is L-selenocysteine + AH2 = hydrogenselenide + L-alanine + A + H(+). Its pathway is cofactor biosynthesis; iron-sulfur cluster biosynthesis. In terms of biological role, cysteine desulfurases mobilize the sulfur from L-cysteine to yield L-alanine, an essential step in sulfur metabolism for biosynthesis of a variety of sulfur-containing biomolecules. Component of the suf operon, which is activated and required under specific conditions such as oxidative stress and iron limitation. Acts as a potent selenocysteine lyase in vitro, that mobilizes selenium from L-selenocysteine. Selenocysteine lyase activity is however unsure in vivo. The polypeptide is Cysteine desulfurase (Salmonella dublin (strain CT_02021853)).